The following is a 312-amino-acid chain: DNA-directed RNA polymerase subunit alpha (312 aa).

Residues 1-227 (MNNFYIKCLK…SFFSSLLENK (227 aa)) are alpha N-terminal domain (alpha-NTD). Positions 243 to 312 (PKNPHTNIAI…KNKLGIVLSN (70 aa)) are alpha C-terminal domain (alpha-CTD).

Belongs to the RNA polymerase alpha chain family. In terms of assembly, in plastids the minimal PEP RNA polymerase catalytic core is composed of four subunits: alpha, beta, beta', and beta''. When a (nuclear-encoded) sigma factor is associated with the core the holoenzyme is formed, which can initiate transcription.

It localises to the plastid. Its subcellular location is the chloroplast. It carries out the reaction RNA(n) + a ribonucleoside 5'-triphosphate = RNA(n+1) + diphosphate. Its function is as follows. DNA-dependent RNA polymerase catalyzes the transcription of DNA into RNA using the four ribonucleoside triphosphates as substrates. The polypeptide is DNA-directed RNA polymerase subunit alpha (Trieres chinensis (Marine centric diatom)).